A 436-amino-acid polypeptide reads, in one-letter code: Trigger factor (436 aa).

The PPIase FKBP-type domain maps to G164–P249.

The protein belongs to the FKBP-type PPIase family. Tig subfamily.

It is found in the cytoplasm. It catalyses the reaction [protein]-peptidylproline (omega=180) = [protein]-peptidylproline (omega=0). In terms of biological role, involved in protein export. Acts as a chaperone by maintaining the newly synthesized protein in an open conformation. Functions as a peptidyl-prolyl cis-trans isomerase. The chain is Trigger factor from Ligilactobacillus salivarius (strain UCC118) (Lactobacillus salivarius).